A 214-amino-acid chain; its full sequence is Neurogenin-3 (214 aa).

The span at 1–14 (MTPQPSGAPTVQVT) shows a compositional bias: polar residues. A disordered region spans residues 1–98 (MTPQPSGAPT…NDRERNRMHN (98 aa)). Residues 15 to 26 (RETERSFPRASE) show a composition bias toward basic and acidic residues. Composition is skewed to basic residues over residues 57–70 (APRKLRARRGGRSR) and 79–88 (KQRRSRRKKA). A bHLH domain is found at 83–135 (SRRKKANDRERNRMHNLNSALDALRGVLPTFPDDAKLTKIETLRFAHNYIWAL).

In terms of assembly, efficient DNA binding requires dimerization with another bHLH protein. Interacts with ATOH8.

It is found in the nucleus. In terms of biological role, acts as a transcriptional regulator. Together with NKX2-2, initiates transcriptional activation of NEUROD1. Involved in neurogenesis. Also required for the specification of a common precursor of the 4 pancreatic endocrine cell types. The polypeptide is Neurogenin-3 (NEUROG3) (Homo sapiens (Human)).